Reading from the N-terminus, the 465-residue chain is E3 ubiquitin-protein ligase parkin (465 aa).

The Ubiquitin-like domain maps to 1 to 76 (MIVFVRFNSS…VHIVQRPWRK (76 aa)). The residue at position 65 (serine 65) is a Phosphoserine; by PINK1. The segment at 77–99 (GQEMNATGGDDPRNAAGGCEREP) is disordered. Residues 77 to 237 (GQEMNATGGD…LIATNSRNIT (161 aa)) form a necessary for PINK1-dependent localization to mitochondria region. The segment at 141–225 (SIYNSFYVYC…PTSDKETSVA (85 aa)) adopts an RING-type 0; atypical zinc-finger fold. Threonine 175 carries the phosphothreonine; by PINK1 modification. Positions 204-238 (TSAEFFFKCGAHPTSDKETSVALHLIATNSRNITC) are SYT11 binding 1. Threonine 217 bears the Phosphothreonine mark. The tract at residues 234-465 (RNITCITCTD…VCMGDHWFDV (232 aa)) is TRIAD supradomain. Zn(2+) contacts are provided by cysteine 238, cysteine 241, cysteine 253, histidine 257, cysteine 260, cysteine 263, cysteine 289, cysteine 293, cysteine 332, and cysteine 337. An RING-type 1 zinc finger spans residues 238-293 (CITCTDVRSPVLVFQCNSRHVICLDCFHLYCVTRLNDRQFVHDPQLGYSLPCVAGC). An SYT11 binding 2 region spans residues 257–293 (HVICLDCFHLYCVTRLNDRQFVHDPQLGYSLPCVAGC). An IBR-type zinc finger spans residues 313–377 (NRYQQYGAEE…CKEAYHEGEC (65 aa)). Lysine 349 is covalently cross-linked (Glycyl lysine isopeptide (Lys-Gly) (interchain with G-Cter in ISG15)). Positions 352, 360, 365, and 368 each coordinate Zn(2+). Lysine 369 participates in a covalent cross-link: Glycyl lysine isopeptide (Lys-Gly) (interchain with G-Cter in ISG15). Zn(2+) contacts are provided by histidine 373 and cysteine 377. Positions 378 to 410 (SAVFEASGTTTQAYRVDERAAEQARWEAASKET) are REP. Cysteine 418 and cysteine 421 together coordinate Zn(2+). The RING-type 2; atypical zinc-finger motif lies at 418 to 449 (CPRCHVPVEKNGGCMHMKCPQPQCRLEWCWNC). Cysteine 431 is an active-site residue. Positions 436, 441, 446, 449, 457, and 461 each coordinate Zn(2+).

Belongs to the RBR family. Parkin subfamily. In terms of assembly, forms an E3 ubiquitin ligase complex with UBE2L3 or UBE2L6. Mediates 'Lys-63'-linked polyubiquitination by associating with UBE2V1. Part of a SCF-like complex, consisting of PRKN, CUL1 and FBXW7. Interacts with SNCAIP. Binds to the C2A and C2B domains of SYT11. Interacts and regulates the turnover of SEPTIN5. Part of a complex, including STUB1, HSP70 and GPR37. The amount of STUB1 in the complex increases during ER stress. STUB1 promotes the dissociation of HSP70 from PRKN and GPR37, thus facilitating PRKN-mediated GPR37 ubiquitination. HSP70 transiently associates with unfolded GPR37 and inhibits the E3 activity of PRKN, whereas, STUB1 enhances the E3 activity of PRKN through promotion of dissociation of HSP70 from PRKN-GPR37 complexes. Interacts with PSMD4 and PACRG. Interacts with LRRK2. Interacts with RANBP2. Interacts with SUMO1 but not SUMO2, which promotes nuclear localization and autoubiquitination. Interacts (via first RING-type domain) with AIMP2 (via N-terminus). Interacts with PSMA7 and RNF41. Interacts with PINK1. Forms a complex with PINK1 and PARK7. Interacts with CHPF, the interaction with isoform 2 may facilitate PRKN transport into the mitochondria. Interacts with MFN2 (phosphorylated), promotes PRKN localization in dysfunctional depolarized mitochondria. Interacts with FBXO7; this promotes translocation to dysfunctional depolarized mitochondria. Interacts with ZNF746. Interacts with heat shock protein 70 family members, including HSPA1L, HSPA1A and HSPA8; interaction HSPA1L promotes translocation to damaged mitochondria. Interacts with BAG4 and, to a lesser extent, BAG5; interaction with BAG4 inhibits translocation to damaged mitochondria. Forms a complex with PRKN and PARK7. Interacts with AMBRA1. ISGylated. Conjugated to ubiquitin-like protein ISG15 upon IFN-beta stimulation. ISGylation positively regulates its E3 ligase activity. In terms of processing, auto-ubiquitinates in an E2-dependent manner leading to its own degradation. Also polyubiquitinated by RNF41 for proteasomal degradation. Post-translationally, S-nitrosylated. The inhibition of PRKN ubiquitin E3 ligase activity by S-nitrosylation could contribute to the degenerative process in PD by impairing the ubiquitination of PRKN substrates. Phosphorylated. Activation requires phosphorylation at Ser-65 by PINK1 and binding to PINK1 phosphorylated ubiquitin. Phosphorylation at Thr-175 by PINK1 and at Thr-217 is important for mitochondrial localization. Highly expressed in the brain including the substantia nigra. Expressed in heart, testis and skeletal muscle. Expression is down-regulated or absent in tumor biopsies, and absent in the brain of PARK2 patients. Overexpression protects dopamine neurons from kainate-mediated apoptosis. Found in serum (at protein level).

It localises to the cytoplasm. It is found in the cytosol. The protein resides in the nucleus. The protein localises to the endoplasmic reticulum. Its subcellular location is the mitochondrion. It localises to the mitochondrion outer membrane. It is found in the cell projection. The protein resides in the neuron projection. The protein localises to the postsynaptic density. Its subcellular location is the presynapse. It catalyses the reaction [E2 ubiquitin-conjugating enzyme]-S-ubiquitinyl-L-cysteine + [acceptor protein]-L-lysine = [E2 ubiquitin-conjugating enzyme]-L-cysteine + [acceptor protein]-N(6)-ubiquitinyl-L-lysine.. The protein operates within protein modification; protein ubiquitination. In the autoinhibited state the side chain of Phe-463 inserts into a hydrophobic groove in RING-0, occluding the ubiquitin acceptor site Cys-431, whereas the REP repressor element binds RING-1 and blocks its E2-binding site. Activation of PRKN requires 2 steps: (1) phosphorylation at Ser-65 by PINK1 and (2) binding to phosphorylated ubiquitin, leading to unlock repression of the catalytic Cys-431 by the RING-0 region via an allosteric mechanism and converting PRKN to its fully-active form. According to another report, phosphorylation at Ser-65 by PINK1 is not essential for activation and only binding to phosphorylated ubiquitin is essential to unlock repression. In addition, ISG15 conjugation positively regulates its ubiquitin E3 ligase activity by suppressing the intramolecular interaction that maintains its autoinhibited conformation. Its function is as follows. Functions within a multiprotein E3 ubiquitin ligase complex, catalyzing the covalent attachment of ubiquitin moieties onto substrate proteins. Substrates include SYT11 and VDAC1. Other substrates are BCL2, CCNE1, GPR37, RHOT1/MIRO1, MFN1, MFN2, STUB1, SNCAIP, SEPTIN5, TOMM20, USP30, ZNF746, MIRO1 and AIMP2. Mediates monoubiquitination as well as 'Lys-6', 'Lys-11', 'Lys-48'-linked and 'Lys-63'-linked polyubiquitination of substrates depending on the context. Participates in the removal and/or detoxification of abnormally folded or damaged protein by mediating 'Lys-63'-linked polyubiquitination of misfolded proteins such as PARK7: 'Lys-63'-linked polyubiquitinated misfolded proteins are then recognized by HDAC6, leading to their recruitment to aggresomes, followed by degradation. Mediates 'Lys-63'-linked polyubiquitination of a 22 kDa O-linked glycosylated isoform of SNCAIP, possibly playing a role in Lewy-body formation. Mediates monoubiquitination of BCL2, thereby acting as a positive regulator of autophagy. Protects against mitochondrial dysfunction during cellular stress, by acting downstream of PINK1 to coordinate mitochondrial quality control mechanisms that remove and replace dysfunctional mitochondrial components. Depending on the severity of mitochondrial damage and/or dysfunction, activity ranges from preventing apoptosis and stimulating mitochondrial biogenesis to regulating mitochondrial dynamics and eliminating severely damaged mitochondria via mitophagy. Activation and recruitment onto the outer membrane of damaged/dysfunctional mitochondria (OMM) requires PINK1-mediated phosphorylation of both PRKN and ubiquitin. After mitochondrial damage, functions with PINK1 to mediate the decision between mitophagy or preventing apoptosis by inducing either the poly- or monoubiquitination of VDAC1, respectively; polyubiquitination of VDAC1 promotes mitophagy, while monoubiquitination of VDAC1 decreases mitochondrial calcium influx which ultimately inhibits apoptosis. When cellular stress results in irreversible mitochondrial damage, promotes the autophagic degradation of dysfunctional depolarized mitochondria (mitophagy) by promoting the ubiquitination of mitochondrial proteins such as TOMM20, RHOT1/MIRO1, MFN1 and USP30. Preferentially assembles 'Lys-6'-, 'Lys-11'- and 'Lys-63'-linked polyubiquitin chains, leading to mitophagy. The PINK1-PRKN pathway also promotes fission of damaged mitochondria by PINK1-mediated phosphorylation which promotes the PRKN-dependent degradation of mitochondrial proteins involved in fission such as MFN2. This prevents the refusion of unhealthy mitochondria with the mitochondrial network or initiates mitochondrial fragmentation facilitating their later engulfment by autophagosomes. Regulates motility of damaged mitochondria via the ubiquitination and subsequent degradation of MIRO1 and MIRO2; in motor neurons, this likely inhibits mitochondrial intracellular anterograde transport along the axons which probably increases the chance of the mitochondria undergoing mitophagy in the soma. Involved in mitochondrial biogenesis via the 'Lys-48'-linked polyubiquitination of transcriptional repressor ZNF746/PARIS which leads to its subsequent proteasomal degradation and allows activation of the transcription factor PPARGC1A. Limits the production of reactive oxygen species (ROS). Regulates cyclin-E during neuronal apoptosis. In collaboration with CHPF isoform 2, may enhance cell viability and protect cells from oxidative stress. Independently of its ubiquitin ligase activity, protects from apoptosis by the transcriptional repression of p53/TP53. May protect neurons against alpha synuclein toxicity, proteasomal dysfunction, GPR37 accumulation, and kainate-induced excitotoxicity. May play a role in controlling neurotransmitter trafficking at the presynaptic terminal and in calcium-dependent exocytosis. May represent a tumor suppressor gene. The chain is E3 ubiquitin-protein ligase parkin from Homo sapiens (Human).